The primary structure comprises 205 residues: Holliday junction branch migration complex subunit RuvA (205 aa).

The tract at residues 1–64 (MIGKLKGVID…EDQIKLFGFR (64 aa)) is domain I. A domain II region spans residues 65 to 143 (TDHEREWFRL…SFANVDPTVV (79 aa)). Residues 144 to 154 (HLAGDLDDQRA) form a flexible linker region. Residues 154–205 (APRPVRDAISALVNLGYGQPQATAAIAAASRGAGENAETAQLIRLGLKELSK) form a domain III region.

It belongs to the RuvA family. In terms of assembly, homotetramer. Forms an RuvA(8)-RuvB(12)-Holliday junction (HJ) complex. HJ DNA is sandwiched between 2 RuvA tetramers; dsDNA enters through RuvA and exits via RuvB. An RuvB hexamer assembles on each DNA strand where it exits the tetramer. Each RuvB hexamer is contacted by two RuvA subunits (via domain III) on 2 adjacent RuvB subunits; this complex drives branch migration. In the full resolvosome a probable DNA-RuvA(4)-RuvB(12)-RuvC(2) complex forms which resolves the HJ.

The protein resides in the cytoplasm. In terms of biological role, the RuvA-RuvB-RuvC complex processes Holliday junction (HJ) DNA during genetic recombination and DNA repair, while the RuvA-RuvB complex plays an important role in the rescue of blocked DNA replication forks via replication fork reversal (RFR). RuvA specifically binds to HJ cruciform DNA, conferring on it an open structure. The RuvB hexamer acts as an ATP-dependent pump, pulling dsDNA into and through the RuvAB complex. HJ branch migration allows RuvC to scan DNA until it finds its consensus sequence, where it cleaves and resolves the cruciform DNA. The protein is Holliday junction branch migration complex subunit RuvA of Nitrobacter winogradskyi (strain ATCC 25391 / DSM 10237 / CIP 104748 / NCIMB 11846 / Nb-255).